The sequence spans 290 residues: Glycine--tRNA ligase alpha subunit (290 aa).

Belongs to the class-II aminoacyl-tRNA synthetase family. In terms of assembly, tetramer of two alpha and two beta subunits.

Its subcellular location is the cytoplasm. It catalyses the reaction tRNA(Gly) + glycine + ATP = glycyl-tRNA(Gly) + AMP + diphosphate. The chain is Glycine--tRNA ligase alpha subunit from Syntrophobacter fumaroxidans (strain DSM 10017 / MPOB).